A 77-amino-acid chain; its full sequence is Large ribosomal subunit protein bL28 (77 aa).

It belongs to the bacterial ribosomal protein bL28 family.

This Polaromonas naphthalenivorans (strain CJ2) protein is Large ribosomal subunit protein bL28.